We begin with the raw amino-acid sequence, 1953 residues long: TATA-binding protein-associated factor mot1 (1953 aa).

An HEAT 1 repeat occupies 36–74 (PDELYNLLGRVVPYLKSKNWDTRVAAAKAIGGIVENVPV). A disordered region spans residues 79-141 (RTSPVKKEET…KLEEERLSTR (63 aa)). Over residues 98 to 108 (TEEKPFIKTEE) the composition is skewed to basic and acidic residues. The segment covering 113 to 130 (SSQSQVVVSSNLTSNSEV) has biased composition (low complexity). Over residues 131 to 141 (SKLEEERLSTR) the composition is skewed to basic and acidic residues. S144 is subject to Phosphoserine. Positions 240–278 (DNVGSNSKGSPTTSIPEHKTSINNNKPEDTPTPSENVHL) are disordered. Positions 242–276 (VGSNSKGSPTTSIPEHKTSINNNKPEDTPTPSENV) are enriched in polar residues. 4 HEAT repeats span residues 358 to 396 (VWPF…YAGF), 513 to 551 (SDYL…KLVQ), 554 to 592 (LSSC…LCSF), and 608 to 646 (EFSF…VQTS). Disordered stretches follow at residues 730 to 762 (SGQP…KDDP) and 1078 to 1103 (DDND…KSSL). HEAT repeat units follow at residues 1191 to 1229 (QSEI…SNAA) and 1270 to 1311 (VRIL…LVPL). The Helicase ATP-binding domain occupies 1370–1543 (AFLNKYELHG…WSLFDFLMPG (174 aa)). 1383-1390 (DDMGLGKT) is an ATP binding site. The DEGH box signature appears at 1494–1497 (DEGH). An HEAT 8 repeat occupies 1580 to 1623 (EAIHKQVLPFMLRRLKEDVLADLPPKIIQDYYCDMSDLQRKLLN). The 153-residue stretch at 1725-1877 (GIDSALTNAV…STVVNQQNAG (153 aa)) folds into the Helicase C-terminal domain. The segment at 1901–1920 (QNIDKEESEDAAGRGLSGTS) is disordered.

Belongs to the SNF2/RAD54 helicase family. As to quaternary structure, forms a complex with TBP which binds TATA DNA.

It localises to the nucleus. Functionally, regulates transcription in association with TATA binding protein (TBP). Removes TBP from the TATA box via its ATPase activity. The protein is TATA-binding protein-associated factor mot1 of Schizosaccharomyces pombe (strain 972 / ATCC 24843) (Fission yeast).